The primary structure comprises 868 residues: Programmed cell death 6-interacting protein (868 aa).

The residue at position 2 (A2) is an N-acetylalanine. The 390-residue stretch at 3–392 (TFISVQLKKT…AQMREATTLA (390 aa)) folds into the BRO1 domain. The segment at 176–503 (TVDISPDTVG…NFRTVLDKAV (328 aa)) is interaction with CHMP4A, CHMP4B and CHMP4C. Residues 176-868 (TVDISPDTVG…PPQQSYYPQQ (693 aa)) form an interaction with EIAV p9 region. Residue K215 is modified to N6-acetyllysine. The interaction with SDCBP stretch occupies residues 418–868 (LTKSRSVIEQ…PPQQSYYPQQ (451 aa)). T479 carries the phosphothreonine modification. S481 carries the phosphoserine modification. The tract at residues 503–868 (VQADGQVKEC…PPQQSYYPQQ (366 aa)) is self-association. Disordered stretches follow at residues 713–809 (IARE…YPGY) and 832–868 (PYPP…YPQQ). An interaction with TSG101 region spans residues 717 to 720 (PSAP). S730 bears the Phosphoserine mark. Pro residues predominate over residues 737–763 (PTPPTPAPRTMPPTKPQPPARPPPPVL). 2 positions are modified to phosphothreonine: T738 and T741. The residue at position 745 (R745) is an Omega-N-methylarginine. The span at 778 to 791 (GAGTAAPAPSQTPG) shows a compositional bias: low complexity. 2 stretches are compositionally biased toward pro residues: residues 792 to 807 (SAPP…PTYP) and 844 to 860 (APYP…PQPP). The interaction with CEP55 stretch occupies residues 801-806 (PPYPTY). An essential to promote virus budding region spans residues 864–868 (YYPQQ).

As to quaternary structure, self-associates. Interacts with SH3KBP1/CIN85. Interacts with PDCD6 in a calcium -dependent manner. Interacts with TSG101 in a calcium-dependent manner; PDCD6IP homooligomerization may be required for TSG101-binding. Interacts with SGSM3. Directly interacts with CHMP4A, CHMP4B and CHMP4C. Directly interacts with CEP55 in a 1:2 stoechiometry. The interaction with CEP55 is required for PDCD6IP targeting to the midbody. May interact with PDGFRB. Interacts with SH3GL1 and SH3GL2/endophilin-1. Forms a complex with SDCBP and SDC2. Found in a complex with F-actin, TJP1/ZO-1 and PARD3. Interacts with CD2AP. Interacts with ARRDC1. Interacts (via BRO1 domain) with the ATG12-ATG3 conjugate; this interaction is bridged by ATG12 and promotes multiple PDCD6IP-mediated functions such as endolysosomal trafficking, macroautophagy and exosome biogenesis. In terms of assembly, (Microbial infection) Interacts with HIV-1 p6. Interacts with HIV-1 p9. (Microbial infection) Interacts with EIAV p9. As to quaternary structure, (Microbial infection) Interacts with Murine leukemia virus Gag polyprotein (via LYPX(n)L motif). In terms of assembly, (Microbial infection) Interacts with ebola virus protein VP40 (via YPx(n)L/I motif). May be phosphorylated on tyrosine residues by activated PDGFRB.

Its subcellular location is the cytoplasm. It localises to the cytosol. The protein localises to the melanosome. The protein resides in the cytoskeleton. It is found in the microtubule organizing center. Its subcellular location is the centrosome. It localises to the secreted. The protein localises to the extracellular exosome. The protein resides in the cell junction. It is found in the tight junction. Its subcellular location is the midbody. It localises to the midbody ring. Functionally, multifunctional protein involved in endocytosis, multivesicular body biogenesis, membrane repair, cytokinesis, apoptosis and maintenance of tight junction integrity. Class E VPS protein involved in concentration and sorting of cargo proteins of the multivesicular body (MVB) for incorporation into intralumenal vesicles (ILVs) that are generated by invagination and scission from the limiting membrane of the endosome. Binds to the phospholipid lysobisphosphatidic acid (LBPA) which is abundant in MVBs internal membranes. The MVB pathway requires the sequential function of ESCRT-O, -I,-II and -III complexes. The ESCRT machinery also functions in topologically equivalent membrane fission events, such as the terminal stages of cytokinesis. Adapter for a subset of ESCRT-III proteins, such as CHMP4, to function at distinct membranes. Required for completion of cytokinesis. May play a role in the regulation of both apoptosis and cell proliferation. Regulates exosome biogenesis in concert with SDC1/4 and SDCBP. By interacting with F-actin, PARD3 and TJP1 secures the proper assembly and positioning of actomyosin-tight junction complex at the apical sides of adjacent epithelial cells that defines a spatial membrane domain essential for the maintenance of epithelial cell polarity and barrier. Its function is as follows. (Microbial infection) Involved in HIV-1 virus budding. Can replace TSG101 it its role of supporting HIV-1 release; this function requires the interaction with CHMP4B. The ESCRT machinery also functions in topologically equivalent membrane fission events, such as enveloped virus budding (HIV-1 and other lentiviruses). This is Programmed cell death 6-interacting protein from Homo sapiens (Human).